The following is a 234-amino-acid chain: Sugar fermentation stimulation protein homolog (234 aa).

This sequence belongs to the SfsA family.

The protein is Sugar fermentation stimulation protein homolog of Shewanella baltica (strain OS223).